The following is a 138-amino-acid chain: ATP synthase epsilon chain (138 aa).

The protein belongs to the ATPase epsilon chain family. F-type ATPases have 2 components, CF(1) - the catalytic core - and CF(0) - the membrane proton channel. CF(1) has five subunits: alpha(3), beta(3), gamma(1), delta(1), epsilon(1). CF(0) has four main subunits: a(1), b(1), b'(1) and c(9-12).

It localises to the cellular thylakoid membrane. Functionally, produces ATP from ADP in the presence of a proton gradient across the membrane. The complex from the organism is particularly stable to disruption and remains functional after 6 hours at 55 degrees Celsius. This chain is ATP synthase epsilon chain, found in Thermosynechococcus vestitus (strain NIES-2133 / IAM M-273 / BP-1).